Here is a 286-residue protein sequence, read N- to C-terminus: Bifunctional protein FolD (286 aa).

NADP(+)-binding positions include 164–166 (GTS) and isoleucine 230.

This sequence belongs to the tetrahydrofolate dehydrogenase/cyclohydrolase family. Homodimer.

The enzyme catalyses (6R)-5,10-methylene-5,6,7,8-tetrahydrofolate + NADP(+) = (6R)-5,10-methenyltetrahydrofolate + NADPH. The catalysed reaction is (6R)-5,10-methenyltetrahydrofolate + H2O = (6R)-10-formyltetrahydrofolate + H(+). It functions in the pathway one-carbon metabolism; tetrahydrofolate interconversion. Functionally, catalyzes the oxidation of 5,10-methylenetetrahydrofolate to 5,10-methenyltetrahydrofolate and then the hydrolysis of 5,10-methenyltetrahydrofolate to 10-formyltetrahydrofolate. The chain is Bifunctional protein FolD from Mesoplasma florum (strain ATCC 33453 / NBRC 100688 / NCTC 11704 / L1) (Acholeplasma florum).